The following is a 314-amino-acid chain: Methionyl-tRNA formyltransferase (314 aa).

112-115 serves as a coordination point for (6S)-5,6,7,8-tetrahydrofolate; sequence SLLP.

Belongs to the Fmt family.

The enzyme catalyses L-methionyl-tRNA(fMet) + (6R)-10-formyltetrahydrofolate = N-formyl-L-methionyl-tRNA(fMet) + (6S)-5,6,7,8-tetrahydrofolate + H(+). Functionally, attaches a formyl group to the free amino group of methionyl-tRNA(fMet). The formyl group appears to play a dual role in the initiator identity of N-formylmethionyl-tRNA by promoting its recognition by IF2 and preventing the misappropriation of this tRNA by the elongation apparatus. The chain is Methionyl-tRNA formyltransferase from Aeromonas salmonicida (strain A449).